We begin with the raw amino-acid sequence, 344 residues long: Dihydroorotase (344 aa).

Residues H14 and H16 each coordinate Zn(2+). Residues 16 to 18 (HLR) and N42 contribute to the substrate site. Zn(2+) contacts are provided by K100, H137, and H175. Residue K100 is modified to N6-carboxylysine. H137 is a substrate binding site. L220 contributes to the substrate binding site. A Zn(2+)-binding site is contributed by D248. Residue D248 is part of the active site. Residues H252 and A264 each coordinate substrate.

This sequence belongs to the metallo-dependent hydrolases superfamily. DHOase family. Class II DHOase subfamily. As to quaternary structure, homodimer. The cofactor is Zn(2+).

The enzyme catalyses (S)-dihydroorotate + H2O = N-carbamoyl-L-aspartate + H(+). The protein operates within pyrimidine metabolism; UMP biosynthesis via de novo pathway; (S)-dihydroorotate from bicarbonate: step 3/3. Functionally, catalyzes the reversible cyclization of carbamoyl aspartate to dihydroorotate. The chain is Dihydroorotase from Cupriavidus pinatubonensis (strain JMP 134 / LMG 1197) (Cupriavidus necator (strain JMP 134)).